Consider the following 495-residue polypeptide: MSPKMVAPPTNLHFVLFPLMAQGHLVPMVDIARILAQRGATVTIITTPYHANRVRPVISRAIATNLKIQLLELQLRSTEAGLPEGCESFDQLPSFEYWKNISTAIDLLQQPAEDLLRELSPPPDCIISDFLFPWTTDVARRLNIPRLVFNGPGCFYLLCIHVAITSNILGENEPVSSNTERVVLPGLPDRIEVTKLQIVGSSRPANVDEMGSWLRAVEAEKASFGIVVNTFEELEPEYVEEYKTVKDKKMWCIGPVSLCNKTGPDLAERGNKAAITEHNCLKWLDERKLGSVLYVCLGSLARISAAQAIELGLGLESINRPFIWCVRNETDELKTWFLDGFEERVRDRGLIVHGWAPQVLILSHPTIGGFLTHCGWNSTIESITAGVPMITWPFFADQFLNEAFIVEVLKIGVRIGVERACLFGEEDKVGVLVKKEDVKKAVECLMDEDEDGDQRRKRVIELAKMAKIAMAEGGSSYENVSSLIRDVTETVRAPH.

Residues Ser299, 355–356 (WA), 373–381 (HCGWNSTIE), and 395–398 (FADQ) each bind UDP-alpha-D-glucose.

The protein belongs to the UDP-glycosyltransferase family.

Functionally, may glycosylate diterpenes or flavonols in leaves. This is UDP-glycosyltransferase 73E1 from Stevia rebaudiana (Stevia).